The sequence spans 877 residues: Alanine--tRNA ligase (877 aa).

Positions 567, 571, 669, and 673 each coordinate Zn(2+).

This sequence belongs to the class-II aminoacyl-tRNA synthetase family. It depends on Zn(2+) as a cofactor.

It is found in the cytoplasm. It carries out the reaction tRNA(Ala) + L-alanine + ATP = L-alanyl-tRNA(Ala) + AMP + diphosphate. Catalyzes the attachment of alanine to tRNA(Ala) in a two-step reaction: alanine is first activated by ATP to form Ala-AMP and then transferred to the acceptor end of tRNA(Ala). Also edits incorrectly charged Ser-tRNA(Ala) and Gly-tRNA(Ala) via its editing domain. This is Alanine--tRNA ligase from Rickettsia prowazekii (strain Madrid E).